The chain runs to 279 residues: Pantothenate synthetase (279 aa).

An ATP-binding site is contributed by 31 to 38; the sequence is MGALHEGH. His-38 functions as the Proton donor in the catalytic mechanism. Gln-62 contacts (R)-pantoate. Position 62 (Gln-62) interacts with beta-alanine. Residue 148–151 participates in ATP binding; that stretch reads GEKD. Gln-154 contributes to the (R)-pantoate binding site. ATP-binding positions include Val-177 and 185–188; that span reads LSSR.

Belongs to the pantothenate synthetase family. In terms of assembly, homodimer.

The protein resides in the cytoplasm. The catalysed reaction is (R)-pantoate + beta-alanine + ATP = (R)-pantothenate + AMP + diphosphate + H(+). It participates in cofactor biosynthesis; (R)-pantothenate biosynthesis; (R)-pantothenate from (R)-pantoate and beta-alanine: step 1/1. Its function is as follows. Catalyzes the condensation of pantoate with beta-alanine in an ATP-dependent reaction via a pantoyl-adenylate intermediate. The sequence is that of Pantothenate synthetase from Cereibacter sphaeroides (strain ATCC 17029 / ATH 2.4.9) (Rhodobacter sphaeroides).